The primary structure comprises 715 residues: 1,4-alpha-glucan branching enzyme GlgB (715 aa).

Catalysis depends on Asp396, which acts as the Nucleophile. The Proton donor role is filled by Glu449.

The protein belongs to the glycosyl hydrolase 13 family. GlgB subfamily. Monomer.

It carries out the reaction Transfers a segment of a (1-&gt;4)-alpha-D-glucan chain to a primary hydroxy group in a similar glucan chain.. The protein operates within glycan biosynthesis; glycogen biosynthesis. Functionally, catalyzes the formation of the alpha-1,6-glucosidic linkages in glycogen by scission of a 1,4-alpha-linked oligosaccharide from growing alpha-1,4-glucan chains and the subsequent attachment of the oligosaccharide to the alpha-1,6 position. This is 1,4-alpha-glucan branching enzyme GlgB from Vibrio vulnificus (strain CMCP6).